The sequence spans 110 residues: Large ribosomal subunit protein P2B (110 aa).

Serine 29 is subject to Phosphoserine. Lysine 49 is covalently cross-linked (Glycyl lysine isopeptide (Lys-Gly) (interchain with G-Cter in ubiquitin)). The tract at residues 66–110 (VPTGGASSAAAGAAGAAAGGDAAEEEKEEEAKEESDDDMGFGLFD) is disordered. Residues 69–86 (GGASSAAAGAAGAAAGGD) show a composition bias toward low complexity. Acidic residues predominate over residues 87–104 (AAEEEKEEEAKEESDDDM). Serine 100 is modified (phosphoserine).

The protein belongs to the eukaryotic ribosomal protein P1/P2 family. Component of the large ribosomal subunit (LSU). Mature yeast ribosomes consist of a small (40S) and a large (60S) subunit. The 40S small subunit contains 1 molecule of ribosomal RNA (18S rRNA) and 33 different proteins (encoded by 57 genes). The large 60S subunit contains 3 rRNA molecules (25S, 5.8S and 5S rRNA) and 46 different proteins (encoded by 81 genes). The 5 acidic ribosomal P-proteins form the stalk structure of the 60S subunit. They are organized as a pentameric complex in which uL10/P0 interacts with 2 heterodimers, P1A-P2B and P1B-P2A. In terms of processing, the N-terminus is not modified.

It is found in the cytoplasm. Functionally, component of the ribosome, a large ribonucleoprotein complex responsible for the synthesis of proteins in the cell. The small ribosomal subunit (SSU) binds messenger RNAs (mRNAs) and translates the encoded message by selecting cognate aminoacyl-transfer RNA (tRNA) molecules. The large subunit (LSU) contains the ribosomal catalytic site termed the peptidyl transferase center (PTC), which catalyzes the formation of peptide bonds, thereby polymerizing the amino acids delivered by tRNAs into a polypeptide chain. The nascent polypeptides leave the ribosome through a tunnel in the LSU and interact with protein factors that function in enzymatic processing, targeting, and the membrane insertion of nascent chains at the exit of the ribosomal tunnel. This chain is Large ribosomal subunit protein P2B, found in Saccharomyces cerevisiae (strain ATCC 204508 / S288c) (Baker's yeast).